We begin with the raw amino-acid sequence, 461 residues long: Phosphoglycerate kinase, chloroplastic (461 aa).

The transit peptide at 1-60 (MALSMKMRANARVSGRRVAAVAPRVVPFSSASSSVLRSGFALRCLWTSAAWAALASVVEA) directs the protein to the chloroplast. (2R)-3-phosphoglycerate-binding residues include Ala82, Asp83, Asn85, Arg100, Ser122, His123, Gly125, Arg126, Arg182, His214, and Arg215. Gly260 lines the ADP pocket. Gly260 lines the CDP pocket. Residues Lys262 and Lys266 each contribute to the AMP site. Residue Lys266 participates in ATP binding. Position 284 (Gly284) interacts with ADP. Gly284 lines the CDP pocket. The AMP site is built by Gly285 and Gly357. Residues Gly285 and Gly357 each contribute to the ATP site. Residues Gly382 and Phe387 each contribute to the CDP site. Residue Phe387 coordinates ADP. An AMP-binding site is contributed by Glu388. Residues Glu388, Asp419, and Ser420 each coordinate ATP. Residue Asp419 participates in Mg(2+) binding.

The protein belongs to the phosphoglycerate kinase family. In terms of assembly, monomer. It depends on Mg(2+) as a cofactor.

Its subcellular location is the plastid. The protein resides in the chloroplast. It catalyses the reaction (2R)-3-phosphoglycerate + ATP = (2R)-3-phospho-glyceroyl phosphate + ADP. It participates in carbohydrate biosynthesis; Calvin cycle. The protein is Phosphoglycerate kinase, chloroplastic of Chlamydomonas reinhardtii (Chlamydomonas smithii).